The chain runs to 253 residues: 3-deoxy-manno-octulosonate cytidylyltransferase (253 aa).

Belongs to the KdsB family.

It is found in the cytoplasm. The enzyme catalyses 3-deoxy-alpha-D-manno-oct-2-ulosonate + CTP = CMP-3-deoxy-beta-D-manno-octulosonate + diphosphate. It functions in the pathway nucleotide-sugar biosynthesis; CMP-3-deoxy-D-manno-octulosonate biosynthesis; CMP-3-deoxy-D-manno-octulosonate from 3-deoxy-D-manno-octulosonate and CTP: step 1/1. It participates in bacterial outer membrane biogenesis; lipopolysaccharide biosynthesis. Its function is as follows. Activates KDO (a required 8-carbon sugar) for incorporation into bacterial lipopolysaccharide in Gram-negative bacteria. The chain is 3-deoxy-manno-octulosonate cytidylyltransferase from Neisseria meningitidis serogroup B (strain ATCC BAA-335 / MC58).